A 161-amino-acid polypeptide reads, in one-letter code: Regulator of ribonuclease activity A (161 aa).

This sequence belongs to the RraA family. Homotrimer. Binds to both RNA-binding sites in the C-terminal region of Rne and to RhlB.

It is found in the cytoplasm. In terms of biological role, globally modulates RNA abundance by binding to RNase E (Rne) and regulating its endonucleolytic activity. Can modulate Rne action in a substrate-dependent manner by altering the composition of the degradosome. Modulates RNA-binding and helicase activities of the degradosome. The protein is Regulator of ribonuclease activity A of Yersinia pseudotuberculosis serotype O:1b (strain IP 31758).